Reading from the N-terminus, the 199-residue chain is Transgelin-2 (199 aa).

The residue at position 2 (Ala-2) is an N-acetylalanine. Ser-11 carries the post-translational modification Phosphoserine. N6-acetyllysine is present on residues Lys-17 and Lys-20. In terms of domain architecture, Calponin-homology (CH) spans 24–136 (ADLEQILIQW…RTLMNLGGLA (113 aa)). Ser-163 is subject to Phosphoserine. A Glycyl lysine isopeptide (Lys-Gly) (interchain with G-Cter in SUMO2) cross-link involves residue Lys-171. Residues 174-199 (IGLQMGTNRGASQAGMTGYGMPRQIL) form a Calponin-like repeat. Thr-180 carries the post-translational modification Phosphothreonine. Omega-N-methylarginine is present on residues Arg-182 and Arg-196.

Belongs to the calponin family. As to expression, expressed in epididymis (at protein level).

The protein is Transgelin-2 (TAGLN2) of Homo sapiens (Human).